The following is a 516-amino-acid chain: GMP synthase [glutamine-hydrolyzing] (516 aa).

The Glutamine amidotransferase type-1 domain maps to Lys-8–Leu-198. Cys-84 functions as the Nucleophile in the catalytic mechanism. Residues His-172 and Glu-174 contribute to the active site. In terms of domain architecture, GMPS ATP-PPase spans Trp-199–Arg-391. Ser-226–Ser-232 contacts ATP.

Homodimer.

It carries out the reaction XMP + L-glutamine + ATP + H2O = GMP + L-glutamate + AMP + diphosphate + 2 H(+). Its pathway is purine metabolism; GMP biosynthesis; GMP from XMP (L-Gln route): step 1/1. Catalyzes the synthesis of GMP from XMP. In Francisella tularensis subsp. mediasiatica (strain FSC147), this protein is GMP synthase [glutamine-hydrolyzing].